We begin with the raw amino-acid sequence, 267 residues long: Undecaprenyl-diphosphatase (267 aa).

Helical transmembrane passes span 1-21 (MSYFEAFILALIQGLTEFLPI), 39-59 (QGLAFDVAVHVGTLMAVVIYF), 83-103 (AKLAWMIVIATIPACVFGLLM), 111-131 (LRSAYVIATTTIIFGLLLWWV), 144-164 (TGWKKALFIGIAQALAMIPGT), 189-209 (FLMSIPIITLAGGYLGMKLVT), 218-238 (FLLTGIVTSFISAYICIHFFL), and 246-266 (MTPFVIYRLILGFGLFAFLLM).

The protein belongs to the UppP family.

The protein resides in the cell inner membrane. The catalysed reaction is di-trans,octa-cis-undecaprenyl diphosphate + H2O = di-trans,octa-cis-undecaprenyl phosphate + phosphate + H(+). Its function is as follows. Catalyzes the dephosphorylation of undecaprenyl diphosphate (UPP). Confers resistance to bacitracin. This Vibrio campbellii (strain ATCC BAA-1116) protein is Undecaprenyl-diphosphatase.